Here is a 940-residue protein sequence, read N- to C-terminus: UvrABC system protein A (940 aa).

Position 31–38 (31–38 (GLSGSGKS)) interacts with ATP. The C4-type zinc finger occupies 252–279 (CPHCGYSMQELEPRLFSFNNPAGACGTC). 2 ABC transporter domains span residues 309–586 (WDQK…PDSL) and 606–936 (RDKN…RFLK). 639–646 (GVSGSGKS) is a binding site for ATP. The C4-type zinc-finger motif lies at 739–765 (CEACQGDGVIKVEMHFLPDVYVPCDVC).

This sequence belongs to the ABC transporter superfamily. UvrA family. As to quaternary structure, forms a heterotetramer with UvrB during the search for lesions.

It localises to the cytoplasm. Functionally, the UvrABC repair system catalyzes the recognition and processing of DNA lesions. UvrA is an ATPase and a DNA-binding protein. A damage recognition complex composed of 2 UvrA and 2 UvrB subunits scans DNA for abnormalities. When the presence of a lesion has been verified by UvrB, the UvrA molecules dissociate. This chain is UvrABC system protein A, found in Vibrio vulnificus (strain CMCP6).